The primary structure comprises 119 residues: Large ribosomal subunit protein uL18 (119 aa).

The protein belongs to the universal ribosomal protein uL18 family. In terms of assembly, part of the 50S ribosomal subunit; part of the 5S rRNA/L5/L18/L25 subcomplex. Contacts the 5S and 23S rRNAs.

Its function is as follows. This is one of the proteins that bind and probably mediate the attachment of the 5S RNA into the large ribosomal subunit, where it forms part of the central protuberance. The sequence is that of Large ribosomal subunit protein uL18 from Jannaschia sp. (strain CCS1).